Reading from the N-terminus, the 227-residue chain is tRNA (guanine-N(1)-)-methyltransferase (227 aa).

Residues Gly-107 and 127–132 contribute to the S-adenosyl-L-methionine site; that span reads LGDFIL.

The protein belongs to the RNA methyltransferase TrmD family. As to quaternary structure, homodimer.

Its subcellular location is the cytoplasm. The catalysed reaction is guanosine(37) in tRNA + S-adenosyl-L-methionine = N(1)-methylguanosine(37) in tRNA + S-adenosyl-L-homocysteine + H(+). In terms of biological role, specifically methylates guanosine-37 in various tRNAs. This Mesomycoplasma hyopneumoniae (strain 7448) (Mycoplasma hyopneumoniae) protein is tRNA (guanine-N(1)-)-methyltransferase.